A 1426-amino-acid polypeptide reads, in one-letter code: DNA-directed RNA polymerase subunit beta' (1426 aa).

Asp-534, Asp-536, and Asp-538 together coordinate Mg(2+). 4 residues coordinate Zn(2+): Cys-1009, Cys-1085, Cys-1092, and Cys-1095.

This sequence belongs to the RNA polymerase beta' chain family. The RNAP catalytic core consists of 2 alpha, 1 beta, 1 beta' and 1 omega subunit. When a sigma factor is associated with the core the holoenzyme is formed, which can initiate transcription. Requires Mg(2+) as cofactor. Zn(2+) is required as a cofactor.

The catalysed reaction is RNA(n) + a ribonucleoside 5'-triphosphate = RNA(n+1) + diphosphate. Its function is as follows. DNA-dependent RNA polymerase catalyzes the transcription of DNA into RNA using the four ribonucleoside triphosphates as substrates. The chain is DNA-directed RNA polymerase subunit beta' from Mycoplasmopsis pulmonis (strain UAB CTIP) (Mycoplasma pulmonis).